The chain runs to 243 residues: DNA repair protein RecO (243 aa).

This sequence belongs to the RecO family.

Functionally, involved in DNA repair and RecF pathway recombination. In Caulobacter sp. (strain K31), this protein is DNA repair protein RecO.